The primary structure comprises 580 residues: D-erythrulose kinase (580 aa).

Residues 7 to 327 form the DhaK domain; the sequence is DPARFTEDML…WAAPADTPAY (321 aa). Residue His217 is the Tele-hemiaminal-histidine intermediate of the active site. The disordered stretch occupies residues 329–360; it reads KGAAQQHVSGERRSEATARSASSGPKLAELSD. The 203-residue stretch at 368-570 folds into the DhaL domain; the sequence is RLVARAFDAM…LALCARTVAD (203 aa). ATP contacts are provided by residues 397–403, 443–444, Gly485, Arg542, and 555–557; these read DGDHGRG, TS, and DAG.

It carries out the reaction D-erythrulose + ATP = D-erythrulose 4-phosphate + ADP + H(+). Its pathway is carbohydrate metabolism; erythritol degradation. The protein operates within carbohydrate metabolism; D-threitol degradation. In terms of biological role, catalyzes the phosphorylation of D-erythrulose to D-erythrulose-4P. Involved in the degradation pathways of erythritol and D-threitol, that allow M.smegmatis to grow on these compounds as the sole carbon source. The protein is D-erythrulose kinase of Mycolicibacterium smegmatis (strain ATCC 700084 / mc(2)155) (Mycobacterium smegmatis).